The primary structure comprises 122 residues: UPF0102 protein MUL_2060 (122 aa).

This sequence belongs to the UPF0102 family.

This Mycobacterium ulcerans (strain Agy99) protein is UPF0102 protein MUL_2060.